Reading from the N-terminus, the 325-residue chain is Replication factor C small subunit (325 aa).

45-52 (GPPGTGKT) is an ATP binding site.

The protein belongs to the activator 1 small subunits family. RfcS subfamily. Heteromultimer composed of small subunits (RfcS) and large subunits (RfcL).

Part of the RFC clamp loader complex which loads the PCNA sliding clamp onto DNA. The sequence is that of Replication factor C small subunit from Sulfolobus acidocaldarius (strain ATCC 33909 / DSM 639 / JCM 8929 / NBRC 15157 / NCIMB 11770).